A 371-amino-acid chain; its full sequence is Zygote-specific protein 3 (371 aa).

The N-terminal stretch at 1–24 is a signal peptide; that stretch reads MLRSAGRVAAVALLALFALGCVSA. The N-linked (GlcNAc...) asparagine glycan is linked to asparagine 41. ANK repeat units follow at residues 62-91 and 94-123; these read TRRLPLVEAARSRDARLVGALLDQGALARV and GTTTPLHLSMQGGSAAIVKLLLAHGADPNA. 2 WW domains span residues 159 to 187 and 283 to 313; these read EPGAWIREERDGQSYYWKPANGESRWAVP and YATPWRELVDEASGAPFFFNVETGDTTWELP.

Its subcellular location is the endoplasmic reticulum lumen. May have a role in the remodeling of the endoplasmic reticulum upon zygote formation. This chain is Zygote-specific protein 3 (ZYS3), found in Chlamydomonas reinhardtii (Chlamydomonas smithii).